A 219-amino-acid chain; its full sequence is Probable glutathione S-transferase MSR-1 (219 aa).

The 80-residue stretch at 4-83 folds into the GST N-terminal domain; that stretch reads NNVVLLDFSG…YIDEVWHEKC (80 aa). Residues serine 14, lysine 41, isoleucine 55, and 67 to 68 each bind glutathione; that span reads ES. The 120-residue stretch at 89–208 folds into the GST C-terminal domain; sequence DPYQRSQARF…LPHPHKIYDF (120 aa).

Belongs to the GST superfamily. HSP26 family.

It catalyses the reaction RX + glutathione = an S-substituted glutathione + a halide anion + H(+). Functionally, may play an important role in hormonal and growth regulatory responses. This chain is Probable glutathione S-transferase MSR-1 (MSR-1), found in Nicotiana plumbaginifolia (Leadwort-leaved tobacco).